We begin with the raw amino-acid sequence, 347 residues long: Glucose 1-dehydrogenase (347 aa).

Cys39 lines the Zn(2+) pocket. Substrate is bound at residue Thr41. The Zn(2+) site is built by His64 and Glu65. Substrate is bound by residues Glu110 and Glu146. Residue Glu146 participates in Zn(2+) binding. NADP(+)-binding positions include Ala178 to Val181, Leu260 to Val262, and Ser289 to Asn291. Asn291 is a binding site for substrate.

The protein belongs to the zinc-containing alcohol dehydrogenase family. Glucose 1-dehydrogenase subfamily. Homodimer. Zn(2+) serves as cofactor.

It carries out the reaction D-glucose + NAD(+) = D-glucono-1,5-lactone + NADH + H(+). It catalyses the reaction D-glucose + NADP(+) = D-glucono-1,5-lactone + NADPH + H(+). Its function is as follows. Catalyzes the NAD(P)(+)-dependent oxidation of D-glucose to D-gluconate via gluconolactone. To a lesser extent, is also active with xylose as substrate, but mannose, arabinose, galactose, fructose 6-phosphate, glucose 6-phosphate, glycerinaldehyde 3-phosphate, ribose, sorbitol, ethanol, erythritol, or lactose are not oxidized by the enzyme. Can utilize both NAD(+) and NADP(+) as electron acceptor, with a marked preference for NADP(+). Is involved in the degradation of glucose through a non-phosphorylative variant of the Entner-Doudoroff pathway. This chain is Glucose 1-dehydrogenase (gdh), found in Thermoproteus tenax (strain ATCC 35583 / DSM 2078 / JCM 9277 / NBRC 100435 / Kra 1).